Here is a 306-residue protein sequence, read N- to C-terminus: Small ribosomal subunit protein uS2 (306 aa).

Position 2 is an N-acetylserine (Ser2). Laminin-binding regions lie at residues 161-180 (IPCN…MLAR) and 205-229 (RDPE…EFQG). [DE]-W-[ST] repeat units follow at residues 230 to 232 (EWT), 245 to 247 (DWS), 276 to 278 (DWS), 286 to 288 (DWS), and 304 to 306 (EWS). A laminin-binding region spans residues 242–306 (EVADWSEGVQ…EWTGTTTEWS (65 aa)). The disordered stretch occupies residues 247 to 306 (SEGVQVPSVPIQQFTAERTDVPPAPKPTEDWSTQPASTDDWSAAPTAQASEWTGTTTEWS). The span at 276–306 (DWSTQPASTDDWSAAPTAQASEWTGTTTEWS) shows a compositional bias: polar residues.

Belongs to the universal ribosomal protein uS2 family. Monomer (37LRP) and homodimer (67LR). Component of the small ribosomal subunit. Mature ribosomes consist of a small (40S) and a large (60S) subunit. The 40S subunit contains about 33 different proteins and 1 molecule of RNA (18S). The 60S subunit contains about 49 different proteins and 3 molecules of RNA (28S, 5.8S and 5S). Interacts with rps21. Interacts with several laminins including at least lamb1. Interacts with mdk. Post-translationally, acylated. Acylation may be a prerequisite for conversion of the monomeric 37 kDa laminin receptor precursor (37LRP) to the mature dimeric 67 kDa laminin receptor (67LR), and may provide a mechanism for membrane association. Cleaved by stromelysin-3 (ST3) at the cell surface. Cleavage by stromelysin-3 may be a mechanism to alter cell-extracellular matrix interactions.

It is found in the cell membrane. The protein localises to the cytoplasm. The protein resides in the nucleus. Required for the assembly and/or stability of the 40S ribosomal subunit. Required for the processing of the 20S rRNA-precursor to mature 18S rRNA in a late step of the maturation of 40S ribosomal subunits. Also functions as a cell surface receptor for laminin. Plays a role in cell adhesion to the basement membrane and in the consequent activation of signaling transduction pathways. May play a role in cell fate determination and tissue morphogenesis. The protein is Small ribosomal subunit protein uS2 (rpsa) of Xenopus laevis (African clawed frog).